Here is a 144-residue protein sequence, read N- to C-terminus: MTVVPAQQTGGGGSSGLYDVLELVLDRGLVIDAFVRVSLVGIEILKIDVRVVVASVDTYLRFAEACNRLDLEAGPRKDPGLPDLVGEMTESGARGKSKGALSGAAETISDAFKQARDDGGSERETSSRPRARKAAPSRRKEEQE.

The segment at 72–144 (EAGPRKDPGL…APSRRKEEQE (73 aa)) is disordered. A compositionally biased stretch (basic and acidic residues) spans 113 to 127 (KQARDDGGSERETSS).

This sequence belongs to the gas vesicle GvpA family. In terms of assembly, the gas vesicle shell is 2 nm thick and consists of a single layer of this protein. It forms helical ribs nearly perpendicular to the long axis of the vesicle.

It is found in the gas vesicle shell. Gas vesicles are hollow, gas filled proteinaceous nanostructures found in some microorganisms. During planktonic growth they allow positioning of the organism at a favorable depth for light or nutrient acquisition. GvpA forms the protein shell. It is not clear what function GVs perform in soil bacteria. The polypeptide is Gas vesicle protein A1 (Streptomyces coelicolor (strain ATCC BAA-471 / A3(2) / M145)).